Consider the following 227-residue polypeptide: UPF0173 metal-dependent hydrolase Bsph_4138 (227 aa).

Belongs to the UPF0173 family.

The protein is UPF0173 metal-dependent hydrolase Bsph_4138 of Lysinibacillus sphaericus (strain C3-41).